Reading from the N-terminus, the 862-residue chain is Protein SEY1 (862 aa).

Topologically, residues 1 to 743 are cytoplasmic; the sequence is MASNGHFSSV…KRSAIGGITQ (743 aa). Residues 48–301 enclose the GB1/RHD3-type G domain; it reads GFNYHLISVF…IPADGFAVYA (254 aa). 58 to 65 provides a ligand contact to GTP; that stretch reads GSQSTGKS. Positions 476-500 form a coiled coil; sequence SDYKQELSLFQKDLEKISSQLRKDE. The helical transmembrane segment at 744-764 threads the bilayer; sequence VPLYFYGLLLALGWNEIIAVL. Residues 765 to 767 lie on the Lumenal side of the membrane; that stretch reads RNP. Residues 768-788 form a helical membrane-spanning segment; sequence IYFIFLLLIGVGAYVTFRLNL. Over 789–862 the chain is Cytoplasmic; that stretch reads WGPMINMAEA…TSDDDNDDDL (74 aa). Positions 818–862 are disordered; sequence SDSGRQAMAMSGRNARGTEEYEMSSNLKSKGRRTDTSDDDNDDDL.

The protein belongs to the TRAFAC class dynamin-like GTPase superfamily. GB1/RHD3 GTPase family. RHD3 subfamily.

Its subcellular location is the endoplasmic reticulum membrane. In terms of biological role, cooperates with the reticulon proteins and tubule-shaping DP1 family proteins to generate and maintain the structure of the tubular endoplasmic reticulum network. Has GTPase activity, which is required for its function in ER organization. This chain is Protein SEY1, found in Arthroderma otae (strain ATCC MYA-4605 / CBS 113480) (Microsporum canis).